A 208-amino-acid chain; its full sequence is Small ribosomal subunit protein bS6 (208 aa).

2 disordered regions span residues 121–143 (SENNPDNPDAPVTSGLASVKPRL) and 185–208 (NQQTSQANNNQPRFQNQFKKGAKP). Residues 185-195 (NQQTSQANNNQ) show a composition bias toward low complexity.

The protein belongs to the bacterial ribosomal protein bS6 family.

Binds together with bS18 to 16S ribosomal RNA. The chain is Small ribosomal subunit protein bS6 (rpsF) from Mycoplasma genitalium (strain ATCC 33530 / DSM 19775 / NCTC 10195 / G37) (Mycoplasmoides genitalium).